The primary structure comprises 74 residues: DNA-directed RNA polymerase subunit omega (74 aa).

This sequence belongs to the RNA polymerase subunit omega family. In terms of assembly, the RNAP catalytic core consists of 2 alpha, 1 beta, 1 beta' and 1 omega subunit. When a sigma factor is associated with the core the holoenzyme is formed, which can initiate transcription.

The catalysed reaction is RNA(n) + a ribonucleoside 5'-triphosphate = RNA(n+1) + diphosphate. In terms of biological role, promotes RNA polymerase assembly. Latches the N- and C-terminal regions of the beta' subunit thereby facilitating its interaction with the beta and alpha subunits. The polypeptide is DNA-directed RNA polymerase subunit omega (Campylobacter jejuni subsp. jejuni serotype O:6 (strain 81116 / NCTC 11828)).